The sequence spans 199 residues: MSDMRSPSQGLNLTDSVYERLLSERIIFLGSEVNDDVANRLCAQILLLAAEDPTKDISLYINSPGGSISAGMAIYDTMVLAPCDIATYAMGMAASMGEFLLAAGTKGKRYALPHARILMHQPLGGVTGSAADIAIQAEQFHVIKKEMFRLNAEFTGQSIERIEADSDRDRWFTAQEALEYGFVDHIITRAATITNGEAQ.

S95 functions as the Nucleophile in the catalytic mechanism. H120 is a catalytic residue.

It belongs to the peptidase S14 family. As to quaternary structure, fourteen ClpP subunits assemble into 2 heptameric rings which stack back to back to give a disk-like structure with a central cavity, resembling the structure of eukaryotic proteasomes.

The protein localises to the cytoplasm. The catalysed reaction is Hydrolysis of proteins to small peptides in the presence of ATP and magnesium. alpha-casein is the usual test substrate. In the absence of ATP, only oligopeptides shorter than five residues are hydrolyzed (such as succinyl-Leu-Tyr-|-NHMec, and Leu-Tyr-Leu-|-Tyr-Trp, in which cleavage of the -Tyr-|-Leu- and -Tyr-|-Trp bonds also occurs).. Functionally, cleaves peptides in various proteins in a process that requires ATP hydrolysis. Has a chymotrypsin-like activity. Plays a major role in the degradation of misfolded proteins. In Mycolicibacterium paratuberculosis (strain ATCC BAA-968 / K-10) (Mycobacterium paratuberculosis), this protein is ATP-dependent Clp protease proteolytic subunit 2.